Here is a 389-residue protein sequence, read N- to C-terminus: GTPase Obg (389 aa).

The Obg domain maps to 1–159 (MKFVDEAVIR…RSLKLELLLL (159 aa)). One can recognise an OBG-type G domain in the interval 160 to 333 (ADVGLLGMPN…LALKLLDYIA (174 aa)). Residues 166-173 (GMPNAGKS), 191-195 (FTTLV), 213-216 (DIPG), 283-286 (NKTD), and 314-316 (SAY) contribute to the GTP site. Serine 173 and threonine 193 together coordinate Mg(2+).

The protein belongs to the TRAFAC class OBG-HflX-like GTPase superfamily. OBG GTPase family. In terms of assembly, monomer. Mg(2+) is required as a cofactor.

It is found in the cytoplasm. Its function is as follows. An essential GTPase which binds GTP, GDP and possibly (p)ppGpp with moderate affinity, with high nucleotide exchange rates and a fairly low GTP hydrolysis rate. Plays a role in control of the cell cycle, stress response, ribosome biogenesis and in those bacteria that undergo differentiation, in morphogenesis control. The polypeptide is GTPase Obg (Shewanella baltica (strain OS223)).